A 334-amino-acid chain; its full sequence is Glycerol-3-phosphate dehydrogenase [NAD(P)+] (334 aa).

2 residues coordinate NADPH: Y14 and K108. Sn-glycerol 3-phosphate contacts are provided by K108, G140, and S142. A144 serves as a coordination point for NADPH. K195, D248, S258, R259, and N260 together coordinate sn-glycerol 3-phosphate. The active-site Proton acceptor is the K195. R259 serves as a coordination point for NADPH. NADPH is bound at residue E285.

Belongs to the NAD-dependent glycerol-3-phosphate dehydrogenase family.

The protein resides in the cytoplasm. It carries out the reaction sn-glycerol 3-phosphate + NAD(+) = dihydroxyacetone phosphate + NADH + H(+). The catalysed reaction is sn-glycerol 3-phosphate + NADP(+) = dihydroxyacetone phosphate + NADPH + H(+). Its pathway is membrane lipid metabolism; glycerophospholipid metabolism. Functionally, catalyzes the reduction of the glycolytic intermediate dihydroxyacetone phosphate (DHAP) to sn-glycerol 3-phosphate (G3P), the key precursor for phospholipid synthesis. The protein is Glycerol-3-phosphate dehydrogenase [NAD(P)+] of Mesoplasma florum (strain ATCC 33453 / NBRC 100688 / NCTC 11704 / L1) (Acholeplasma florum).